A 378-amino-acid polypeptide reads, in one-letter code: tRNA (guanine(26)-N(2))-dimethyltransferase (378 aa).

Positions 4 to 374 (KEVTEGKVRI…KGYEEIIRCV (371 aa)) constitute a Trm1 methyltransferase domain. Arginine 44, arginine 69, aspartate 87, aspartate 114, and alanine 115 together coordinate S-adenosyl-L-methionine. Zn(2+) is bound by residues cysteine 246, cysteine 249, cysteine 263, and cysteine 266.

It belongs to the class I-like SAM-binding methyltransferase superfamily. Trm1 family.

The enzyme catalyses guanosine(26) in tRNA + 2 S-adenosyl-L-methionine = N(2)-dimethylguanosine(26) in tRNA + 2 S-adenosyl-L-homocysteine + 2 H(+). In terms of biological role, dimethylates a single guanine residue at position 26 of a number of tRNAs using S-adenosyl-L-methionine as donor of the methyl groups. This Saccharolobus islandicus (strain L.S.2.15 / Lassen #1) (Sulfolobus islandicus) protein is tRNA (guanine(26)-N(2))-dimethyltransferase.